A 236-amino-acid polypeptide reads, in one-letter code: UPF0502 protein BamMC406_5439 (236 aa).

It belongs to the UPF0502 family.

This chain is UPF0502 protein BamMC406_5439, found in Burkholderia ambifaria (strain MC40-6).